A 205-amino-acid chain; its full sequence is Large ribosomal subunit protein bL9 (205 aa).

Positions 160 to 205 are disordered; sequence RDRKSRNAAAASEVQDAPVEDGGDEVVSVDSVAAEDGGADASGGTA. Over residues 184 to 195 the composition is skewed to low complexity; that stretch reads EVVSVDSVAAED.

It belongs to the bacterial ribosomal protein bL9 family.

Functionally, binds to the 23S rRNA. The sequence is that of Large ribosomal subunit protein bL9 from Anaplasma phagocytophilum (strain HZ).